Consider the following 307-residue polypeptide: Ribonuclease Z (307 aa).

H63, H65, D67, H68, H141, D212, and H270 together coordinate Zn(2+). The active-site Proton acceptor is the D67.

The protein belongs to the RNase Z family. In terms of assembly, homodimer. The cofactor is Zn(2+).

The catalysed reaction is Endonucleolytic cleavage of RNA, removing extra 3' nucleotides from tRNA precursor, generating 3' termini of tRNAs. A 3'-hydroxy group is left at the tRNA terminus and a 5'-phosphoryl group is left at the trailer molecule.. Zinc phosphodiesterase, which displays some tRNA 3'-processing endonuclease activity. Probably involved in tRNA maturation, by removing a 3'-trailer from precursor tRNA. The protein is Ribonuclease Z of Bacillus anthracis (strain A0248).